Here is a 556-residue protein sequence, read N- to C-terminus: Formate--tetrahydrofolate ligase (556 aa).

65 to 72 (TPAGEGKT) serves as a coordination point for ATP.

This sequence belongs to the formate--tetrahydrofolate ligase family.

It catalyses the reaction (6S)-5,6,7,8-tetrahydrofolate + formate + ATP = (6R)-10-formyltetrahydrofolate + ADP + phosphate. It functions in the pathway one-carbon metabolism; tetrahydrofolate interconversion. This chain is Formate--tetrahydrofolate ligase, found in Clostridium cylindrosporum.